The sequence spans 442 residues: C4-dicarboxylate transport protein (442 aa).

The next 9 helical transmembrane spans lie at 13–33 (VLYFQVLTAVVIGVLLGHFYP), 49–69 (GIKMLIAPIIFCTVVLGIAGM), 81–101 (LALLYFEIVSTIALMVGLVVV), 149–169 (AFAKGEILQVLFIAILFGFAL), 193–213 (MIAIIMKFAPIGAFGAMAFTI), 227–247 (LMGSFYLTCLLFVFIVLGIIA), 312–332 (IYLTMAAVFIAQATNTPMTLL), 336–356 (TLLAVLLLTSKGAAGVTGSGF), and 357–377 (IVLAATLSAVGDVPVAGLAII).

Belongs to the dicarboxylate/amino acid:cation symporter (DAACS) (TC 2.A.23) family.

Its subcellular location is the cell membrane. Its function is as follows. Responsible for the transport of dicarboxylates such as succinate, fumarate, and malate across the membrane. The sequence is that of C4-dicarboxylate transport protein from Polynucleobacter asymbioticus (strain DSM 18221 / CIP 109841 / QLW-P1DMWA-1) (Polynucleobacter necessarius subsp. asymbioticus).